The following is a 305-amino-acid chain: Ubiquinone biosynthesis protein COQ4 homolog, mitochondrial (305 aa).

His-150, Asp-151, His-154, and Glu-166 together coordinate Zn(2+).

This sequence belongs to the COQ4 family. As to quaternary structure, component of a multi-subunit COQ enzyme complex. Zn(2+) is required as a cofactor.

It is found in the mitochondrion inner membrane. It catalyses the reaction a 4-hydroxy-3-methoxy-5-(all-trans-polyprenyl)benzoate + H(+) = a 2-methoxy-6-(all-trans-polyprenyl)phenol + CO2. The protein operates within cofactor biosynthesis; ubiquinone biosynthesis. Functionally, lyase that catalyzes the C1-decarboxylation of 4-hydroxy-3-methoxy-5-(all-trans-polyprenyl)benzoic acid into 2-methoxy-6-(all-trans-polyprenyl)phenol during ubiquinone biosynthesis. The protein is Ubiquinone biosynthesis protein COQ4 homolog, mitochondrial of Cryptosporidium parvum (strain Iowa II).